The chain runs to 210 residues: 3-hexulose-6-phosphate synthase (210 aa).

Belongs to the HPS/KGPDC family. HPS subfamily.

It carries out the reaction D-ribulose 5-phosphate + formaldehyde = D-arabino-hex-3-ulose 6-phosphate. The protein operates within one-carbon metabolism; formaldehyde assimilation via RuMP pathway; D-fructose 6-phosphate from D-ribulose 5-phosphate and formaldehyde: step 1/2. Its function is as follows. Catalyzes the condensation of ribulose 5-phosphate with formaldehyde to form 3-hexulose 6-phosphate. Together with HxlB, may act as a formaldehyde detoxification system. This Bacillus subtilis (strain 168) protein is 3-hexulose-6-phosphate synthase (hxlA).